The following is a 92-amino-acid chain: C-C motif chemokine 4 (92 aa).

Residues 1–23 (MKLCVTVLSLLVLVAAFCSPALS) form the signal peptide. Cystine bridges form between Cys-34–Cys-58 and Cys-35–Cys-74.

The protein belongs to the intercrine beta (chemokine CC) family. In terms of assembly, homodimer. Interacts with CCR5.

The protein localises to the secreted. Functionally, monokine with inflammatory and chemokinetic properties. The protein is C-C motif chemokine 4 (CCL4) of Canis lupus familiaris (Dog).